We begin with the raw amino-acid sequence, 437 residues long: GTPase Der (437 aa).

EngA-type G domains are found at residues 4–167 (PIVA…PDNA) and 175–352 (IHFS…QHHR). GTP is bound by residues 10-17 (GRPNVGKS), 57-61 (DTGGI), 119-122 (NKVD), 181-188 (GRPNVGKS), 229-233 (DTAGI), and 294-297 (NKWD). The 85-residue stretch at 353-437 (QRIQSAVLND…PIHLIKRQRQ (85 aa)) folds into the KH-like domain.

It belongs to the TRAFAC class TrmE-Era-EngA-EngB-Septin-like GTPase superfamily. EngA (Der) GTPase family. In terms of assembly, associates with the 50S ribosomal subunit.

GTPase that plays an essential role in the late steps of ribosome biogenesis. The sequence is that of GTPase Der from Limosilactobacillus reuteri (strain DSM 20016) (Lactobacillus reuteri).